The sequence spans 433 residues: Serine--tRNA ligase (433 aa).

An L-serine-binding site is contributed by 236-238 (TAE). 267–269 (RSE) lines the ATP pocket. Glu-290 contacts L-serine. 354–357 (EISS) contributes to the ATP binding site. Ser-394 serves as a coordination point for L-serine.

Belongs to the class-II aminoacyl-tRNA synthetase family. Type-1 seryl-tRNA synthetase subfamily. As to quaternary structure, homodimer. The tRNA molecule binds across the dimer.

The protein localises to the cytoplasm. It catalyses the reaction tRNA(Ser) + L-serine + ATP = L-seryl-tRNA(Ser) + AMP + diphosphate + H(+). The catalysed reaction is tRNA(Sec) + L-serine + ATP = L-seryl-tRNA(Sec) + AMP + diphosphate + H(+). It functions in the pathway aminoacyl-tRNA biosynthesis; selenocysteinyl-tRNA(Sec) biosynthesis; L-seryl-tRNA(Sec) from L-serine and tRNA(Sec): step 1/1. Catalyzes the attachment of serine to tRNA(Ser). Is also able to aminoacylate tRNA(Sec) with serine, to form the misacylated tRNA L-seryl-tRNA(Sec), which will be further converted into selenocysteinyl-tRNA(Sec). The protein is Serine--tRNA ligase of Acidiphilium cryptum (strain JF-5).